A 513-amino-acid polypeptide reads, in one-letter code: MQLNSTEISDLIKQRIEQFEVVSESRNEGTIVAVSDGIIRIHGLADVMQGEMIELPGNRFAIALNLERDSVGAVVMGPYADLAEGVKVKTTGRILEVPVGRGLLGRVVNTLGEPIDGKGPIDNDGYSPIEVIAPGVIERQSVDQPVQTGYKAVDAMIPIGRGQRELIIGDRQTGKTAMAIDAIINQKNSGIKCVYVAIGQKASTIANVVRKLEEHGALANTIVVVATASEAAALQYLAPYSGCSMGEYFRDRGEDSLIVYDDLSKQAVAYRQISLLLKRPPGREAYPGDVFYLHSRLLERASRVNAIYVEKFTKGAVTGKTGSLTALPIIETQAGDVSAFVPTNVISITDGQIFLETDLFNSGLRPAVNPGISVSRVGGAAQTKIIKKLSGGIRTALAQYRELAAFSQFASDLDDATRAQLEHGVRVTELMKQKQYAPMSVAAQAVSIFSAEKGYLKSVELNKVGNFEAALLSFMNSEHAPLMKLINDTGDYSADIEAELKAGLDKFVATQTW.

169 to 176 (GDRQTGKT) serves as a coordination point for ATP.

It belongs to the ATPase alpha/beta chains family. As to quaternary structure, F-type ATPases have 2 components, CF(1) - the catalytic core - and CF(0) - the membrane proton channel. CF(1) has five subunits: alpha(3), beta(3), gamma(1), delta(1), epsilon(1). CF(0) has three main subunits: a(1), b(2) and c(9-12). The alpha and beta chains form an alternating ring which encloses part of the gamma chain. CF(1) is attached to CF(0) by a central stalk formed by the gamma and epsilon chains, while a peripheral stalk is formed by the delta and b chains.

The protein resides in the cell inner membrane. It catalyses the reaction ATP + H2O + 4 H(+)(in) = ADP + phosphate + 5 H(+)(out). Its function is as follows. Produces ATP from ADP in the presence of a proton gradient across the membrane. The alpha chain is a regulatory subunit. This chain is ATP synthase subunit alpha, found in Shewanella baltica (strain OS223).